We begin with the raw amino-acid sequence, 272 residues long: 1,4-dihydroxy-2-naphthoyl-CoA synthase (272 aa).

Substrate-binding positions include R33, 72–76, Y84, 116–120, T142, S148, Y245, and K260; these read SGGDQ and YAIGG. 141–143 contributes to the hydrogencarbonate binding site; it reads QTG. Over residues 253–264 the composition is skewed to basic and acidic residues; that stretch reads GRDAFKEKRDPD. The segment at 253-272 is disordered; it reads GRDAFKEKRDPDFDQFPKFP.

This sequence belongs to the enoyl-CoA hydratase/isomerase family. MenB subfamily. The cofactor is hydrogencarbonate.

It carries out the reaction 2-succinylbenzoyl-CoA + H(+) = 1,4-dihydroxy-2-naphthoyl-CoA + H2O. It functions in the pathway quinol/quinone metabolism; 1,4-dihydroxy-2-naphthoate biosynthesis; 1,4-dihydroxy-2-naphthoate from chorismate: step 6/7. It participates in quinol/quinone metabolism; menaquinone biosynthesis. Functionally, converts o-succinylbenzoyl-CoA (OSB-CoA) to 1,4-dihydroxy-2-naphthoyl-CoA (DHNA-CoA). This is 1,4-dihydroxy-2-naphthoyl-CoA synthase from Staphylococcus saprophyticus subsp. saprophyticus (strain ATCC 15305 / DSM 20229 / NCIMB 8711 / NCTC 7292 / S-41).